A 210-amino-acid polypeptide reads, in one-letter code: Cytidylate kinase (210 aa).

Residue 7 to 15 participates in ATP binding; sequence GPAASGKGT.

Belongs to the cytidylate kinase family. Type 1 subfamily.

The protein resides in the cytoplasm. The catalysed reaction is CMP + ATP = CDP + ADP. The enzyme catalyses dCMP + ATP = dCDP + ADP. In Methylobacterium sp. (strain 4-46), this protein is Cytidylate kinase.